We begin with the raw amino-acid sequence, 893 residues long: 26S proteasome non-ATPase regulatory subunit 2 (893 aa).

The interval 1–59 (MPQKEVTIPVPAKGGSNKEEDKKDNKDTEEKNTTTNTTTKDNKKDKKKDKKEETLSPED) is disordered. Basic and acidic residues-rich tracts occupy residues 16–32 (SNKE…EEKN) and 40–59 (KDNK…SPED). PC repeat units lie at residues 412–445 (STVA…HCSN), 446–482 (GALM…GTRI), 483–517 (SAIF…KMEF), 522–555 (GLAL…ASES), 562–583 (LGLG…ETLK), 666–700 (AIPL…EVAQ), and 701–735 (GAIL…DVHL).

The protein belongs to the proteasome subunit S2 family.

Functionally, acts as a regulatory subunit of the 26 proteasome which is involved in the ATP-dependent degradation of ubiquitinated proteins. The protein is 26S proteasome non-ATPase regulatory subunit 2 (psmD2) of Dictyostelium discoideum (Social amoeba).